A 946-amino-acid polypeptide reads, in one-letter code: Villin-4 (946 aa).

Gelsolin-like repeat units lie at residues 28–109 (NFKP…ETEK), 152–219 (VHVK…EDGK), 274–339 (LEHE…TIMF), and 641–715 (EIHH…PQFF). Disordered regions lie at residues 744–789 (ATPS…GRSP), 801–832 (PSTR…SSKQ), and 844–902 (GPTK…PAPD). Positions 765 to 777 (QDKSQQRTRSMSH) are enriched in polar residues. Residues 874–883 (SENEPEDDEN) show a composition bias toward acidic residues. The HP domain occupies 881–946 (DENSTIYPYE…NRLKSDLQLF (66 aa)).

It belongs to the villin/gelsolin family.

It is found in the cytoplasm. The protein localises to the cytoskeleton. Its function is as follows. Ca(2+)-regulated actin-binding protein. Binds actin microfilaments (MFs). Involved in actin filament bundling, severing and capping. Caps the barbed end of actin filaments and is able to sever them in a calcium-dependent manner. The sequence is that of Villin-4 from Oryza sativa subsp. japonica (Rice).